The chain runs to 766 residues: MGNRSLTEADHALLSKPLVPTSAEHTQTQEYPRPFVDGSNSQSGSELQASPQGQFGEKALTSTNRFIPLANDDPGMQHEMGLDPSMRRRREEWAERGAAKIVKDVVDPATGELTKHVVKMGIKDFKFGEQLGDGSYSSVVLATARDSGKKYAVKVLSKEYLIRQKKVKYVTVEKLALQKLNGTKGIFKLFFTFQDEASLYFLLEYAPHGDFLGLIKKYGSLNETCARYYASQIIDAVDSLHNIGIIHRDIKPENILLDKNMKVKLTDFGTAKILPEEPSNTADGKPYFDLYAKSKSFVGTAEYVSPELLNDNYTDSRCDIWAFGCILYQMLAGKPPFKAANEYLTFQKVMKIQYAFTAGFPQIVKDLVKKLLVRDPNDRLTIKQIKAHLFFHEVNFEDGSVWDDNPPEIQPYKINAEAMKPLQKVSESDTTVKMANLQLAGNGHADTPLQAPAATSQEHSVISMTAATAAFNKDYTSQPKLGSKSSTSVRSASNNTDREVIQKKVSKNRASVSSPSISTTSRGKDNRSRSSDAFWSRYLQNMDERVLLMKEVALSTRNLEDSPVGLENVALDYKNPLDIEPPTDSAGKFYKKMFLITNLGRALVFVKRRSLSMWEEQEFELQFELELNDVEKIRFISDQVLEIDGSRTIFIGCKERAVLMKLWKLIHNGMTAKPKVVSPKSDHKMFDKFILQKRQNTKKKNQAPPVPQSNRLINGLPDRCILKTPEEGALHTKRPTSLQTRSSSNYSKLLARSTQMRKNMTRTDEK.

A disordered region spans residues 1–52 (MGNRSLTEADHALLSKPLVPTSAEHTQTQEYPRPFVDGSNSQSGSELQASPQ). A compositionally biased stretch (polar residues) spans 38 to 52 (GSNSQSGSELQASPQ). The 267-residue stretch at 125-391 (FKFGEQLGDG…IKQIKAHLFF (267 aa)) folds into the Protein kinase domain. ATP is bound by residues 135-137 (SYS) and lysine 154. A PIF-pocket region spans residues 156–201 (LSKEYLIRQKKVKYVTVEKLALQKLNGTKGIFKLFFTFQDEASLYF). Residues 204–206 (EYA) and aspartate 210 each bind ATP. Aspartate 249 functions as the Proton acceptor in the catalytic mechanism. ATP is bound by residues glutamate 253 and aspartate 267. A phosphoserine mark is found at serine 294 and serine 296. Residues 476 to 495 (TSQPKLGSKSSTSVRSASNN) are compositionally biased toward polar residues. Disordered regions lie at residues 476–529 (TSQP…NRSR) and 725–745 (PEEG…SSSN). Low complexity predominate over residues 511–521 (SVSSPSISTTS). Polar residues predominate over residues 735–745 (PTSLQTRSSSN).

Belongs to the protein kinase superfamily. AGC Ser/Thr protein kinase family. PDPK1 subfamily.

The catalysed reaction is L-seryl-[protein] + ATP = O-phospho-L-seryl-[protein] + ADP + H(+). It carries out the reaction L-threonyl-[protein] + ATP = O-phospho-L-threonyl-[protein] + ADP + H(+). Activates YPK1 by phosphorylating of a threonine residue. In Saccharomyces cerevisiae (strain ATCC 204508 / S288c) (Baker's yeast), this protein is Serine/threonine-protein kinase PKH1 (PKH1).